Consider the following 189-residue polypeptide: Orotate phosphoribosyltransferase (189 aa).

5-phospho-alpha-D-ribose 1-diphosphate is bound by residues Arg-99, Lys-100, Lys-103, His-105, and 126 to 134; that span reads EDVITTGGS. Orotate contacts are provided by Thr-130 and Arg-158.

Belongs to the purine/pyrimidine phosphoribosyltransferase family. PyrE subfamily. As to quaternary structure, homodimer. Mg(2+) serves as cofactor.

It carries out the reaction orotidine 5'-phosphate + diphosphate = orotate + 5-phospho-alpha-D-ribose 1-diphosphate. The protein operates within pyrimidine metabolism; UMP biosynthesis via de novo pathway; UMP from orotate: step 1/2. Functionally, catalyzes the transfer of a ribosyl phosphate group from 5-phosphoribose 1-diphosphate to orotate, leading to the formation of orotidine monophosphate (OMP). This chain is Orotate phosphoribosyltransferase, found in Thermosynechococcus vestitus (strain NIES-2133 / IAM M-273 / BP-1).